The primary structure comprises 76 residues: Omega-conotoxin-like TxMKLT1-0211 (76 aa).

The N-terminal stretch at 1–22 (MKLTCMMIVAVLFLTAWTFVTA) is a signal peptide. Residues 23-52 (VPHSSNALENLYLKAHHEMNNPEDSELNKR) constitute a propeptide that is removed on maturation. 3 cysteine pairs are disulfide-bonded: C53–C67, C60–C71, and C66–C75.

This sequence belongs to the conotoxin O1 superfamily. As to expression, expressed by the venom duct.

It localises to the secreted. Omega-conotoxins act at presynaptic membranes, they bind and block voltage-gated calcium channels (Cav). The protein is Omega-conotoxin-like TxMKLT1-0211 of Conus textile (Cloth-of-gold cone).